Reading from the N-terminus, the 400-residue chain is Subtilisin-like protease 7 (400 aa).

The signal sequence occupies residues 1 to 20 (MGFITKAIPLALAAASVING). Positions 21 to 119 (AEILETRAGV…IERDARVQIN (99 aa)) are excised as a propeptide. The 83-residue stretch at 36–118 (KYIVVMNDGI…YIERDARVQI (83 aa)) folds into the Inhibitor I9 domain. The 272-residue stretch at 129–400 (SWGLARVGSK…SKLINNGSGM (272 aa)) folds into the Peptidase S8 domain. Residues Asp161 and His192 each act as charge relay system in the active site. The N-linked (GlcNAc...) asparagine glycan is linked to Asn252. Ser346 (charge relay system) is an active-site residue. Asn396 carries N-linked (GlcNAc...) asparagine glycosylation.

It belongs to the peptidase S8 family.

It is found in the secreted. In terms of biological role, secreted subtilisin-like serine protease with keratinolytic activity that contributes to pathogenicity. The polypeptide is Subtilisin-like protease 7 (SUB7) (Trichophyton violaceum).